Reading from the N-terminus, the 282-residue chain is 5'-nucleotidase SurE (282 aa).

Residues Asp-12, Asp-13, Ser-43, and Asn-98 each coordinate a divalent metal cation.

The protein belongs to the SurE nucleotidase family. It depends on a divalent metal cation as a cofactor.

It localises to the cytoplasm. The catalysed reaction is a ribonucleoside 5'-phosphate + H2O = a ribonucleoside + phosphate. Functionally, nucleotidase that shows phosphatase activity on nucleoside 5'-monophosphates. This chain is 5'-nucleotidase SurE, found in Hyperthermus butylicus (strain DSM 5456 / JCM 9403 / PLM1-5).